A 534-amino-acid chain; its full sequence is CTP synthase (534 aa).

The interval 1–267 (MTKYIFVTGG…DQIVCDHLKL (267 aa)) is amidoligase domain. S13 is a CTP binding site. S13 is a binding site for UTP. Residue 14–19 (SIGKGI) coordinates ATP. An L-glutamine-binding site is contributed by Y54. D71 is a binding site for ATP. D71 and E141 together coordinate Mg(2+). Residues 148 to 150 (DIE), 188 to 193 (KTKPTQ), and K224 each bind CTP. Residues 188–193 (KTKPTQ) and K224 contribute to the UTP site. In terms of domain architecture, Glutamine amidotransferase type-1 spans 292–534 (KIALVGKYVE…FVTAAVENAK (243 aa)). Position 354 (G354) interacts with L-glutamine. C381 functions as the Nucleophile; for glutamine hydrolysis in the catalytic mechanism. L-glutamine contacts are provided by residues 382–385 (LGMQ), E405, and R463. Active-site residues include H508 and E510.

This sequence belongs to the CTP synthase family. As to quaternary structure, homotetramer.

It carries out the reaction UTP + L-glutamine + ATP + H2O = CTP + L-glutamate + ADP + phosphate + 2 H(+). The catalysed reaction is L-glutamine + H2O = L-glutamate + NH4(+). It catalyses the reaction UTP + NH4(+) + ATP = CTP + ADP + phosphate + 2 H(+). It functions in the pathway pyrimidine metabolism; CTP biosynthesis via de novo pathway; CTP from UDP: step 2/2. With respect to regulation, allosterically activated by GTP, when glutamine is the substrate; GTP has no effect on the reaction when ammonia is the substrate. The allosteric effector GTP functions by stabilizing the protein conformation that binds the tetrahedral intermediate(s) formed during glutamine hydrolysis. Inhibited by the product CTP, via allosteric rather than competitive inhibition. Catalyzes the ATP-dependent amination of UTP to CTP with either L-glutamine or ammonia as the source of nitrogen. Regulates intracellular CTP levels through interactions with the four ribonucleotide triphosphates. This chain is CTP synthase, found in Streptococcus thermophilus (strain CNRZ 1066).